A 219-amino-acid chain; its full sequence is MSIQVFCDFDGTITNNDNIMSIMEKFAPPEAEEVKNRILSQELSIQEGVSQLFQLIPTNLHDEIIQFLIETAEIRNGFHEFIQFVNENNISFYVISGGMDFFVYPLLQGLIPKEQIYCNETDFSNEYITVNWPHPCDRLCQNHCGLCKSSLIRKLSDTNDFHIVIGDSITDLQAAKQADKVFARDFLITKCEENHISYTPFETFHDVQTELKHLLEVKL.

It belongs to the HAD-like hydrolase superfamily. MtnX family.

The enzyme catalyses 2-hydroxy-5-methylsulfanyl-3-oxopent-1-enyl phosphate + H2O = 1,2-dihydroxy-5-(methylsulfanyl)pent-1-en-3-one + phosphate. It functions in the pathway amino-acid biosynthesis; L-methionine biosynthesis via salvage pathway; L-methionine from S-methyl-5-thio-alpha-D-ribose 1-phosphate: step 4/6. In terms of biological role, dephosphorylates 2-hydroxy-3-keto-5-methylthiopentenyl-1-phosphate (HK-MTPenyl-1-P) yielding 1,2-dihydroxy-3-keto-5-methylthiopentene (DHK-MTPene). The protein is 2-hydroxy-3-keto-5-methylthiopentenyl-1-phosphate phosphatase of Bacillus thuringiensis (strain Al Hakam).